Here is a 447-residue protein sequence, read N- to C-terminus: Histidine--tRNA ligase (447 aa).

Belongs to the class-II aminoacyl-tRNA synthetase family. As to quaternary structure, homodimer.

The protein resides in the cytoplasm. The catalysed reaction is tRNA(His) + L-histidine + ATP = L-histidyl-tRNA(His) + AMP + diphosphate + H(+). The chain is Histidine--tRNA ligase (hisS) from Synechocystis sp. (strain ATCC 27184 / PCC 6803 / Kazusa).